The following is a 185-amino-acid chain: Small ribosomal subunit protein uS5 (185 aa).

Residues 18–81 (FVDKLVHINR…ESAKRALIRV (64 aa)) enclose the S5 DRBM domain. The tract at residues 157-185 (SPRSVAARRGIKVSQLQSRRRVEDAEATD) is disordered. The span at 176–185 (RRVEDAEATD) shows a compositional bias: basic and acidic residues.

Belongs to the universal ribosomal protein uS5 family. In terms of assembly, part of the 30S ribosomal subunit. Contacts proteins S4 and S8.

With S4 and S12 plays an important role in translational accuracy. Functionally, located at the back of the 30S subunit body where it stabilizes the conformation of the head with respect to the body. The polypeptide is Small ribosomal subunit protein uS5 (Xanthobacter autotrophicus (strain ATCC BAA-1158 / Py2)).